Consider the following 2148-residue polypeptide: Polyketide synthase 1 (2148 aa).

The segment at 19-261 (FIFGDQSSCN…TPLAVHAPYH (243 aa)) is N-terminal acylcarrier protein transacylase domain (SAT). A Ketosynthase family 3 (KS3) domain is found at 394–829 (ESKIAIIGMS…GGNTALLVED (436 aa)). Catalysis depends on for beta-ketoacyl synthase activity residues Cys566, His701, and His745. Residues 930-1236 (FVFSGQGSQY…MRNKDGWQVL (307 aa)) are malonyl-CoA:ACP transacylase (MAT) domain. The active-site For acyl/malonyl transferase activity is Ser1018. A product template (PT) domain region spans residues 1310–1624 (TASVHRMVHE…RKVLNTAMPP (315 aa)). Residues 1314–1447 (HRMVHESVEK…SSLHFEQPKV (134 aa)) form an N-terminal hotdog fold region. In terms of domain architecture, PKS/mFAS DH spans 1314–1619 (HRMVHESVEK…FQGIPRKVLN (306 aa)). His1346 serves as the catalytic Proton acceptor; for dehydratase activity. The tract at residues 1474–1619 (LNSRMSSGVI…FQGIPRKVLN (146 aa)) is C-terminal hotdog fold. The Proton donor; for dehydratase activity role is filled by Asp1533. Residues 1619–1655 (NTAMPPPKSQNEAPVRSGPAKPAAKPPRSASSEHSGH) form a disordered region. Residues 1634 to 1650 (RSGPAKPAAKPPRSASS) are compositionally biased toward low complexity. One can recognise a Carrier 1 domain in the interval 1678–1752 (RNPMLPVFKI…DLAAQLGLDT (75 aa)). Ser1712 is modified (O-(pantetheine 4'-phosphoryl)serine). Residues 1755–1790 (SDQSSGQSSSSGGLSPRSDSIGEITSSVTTPPSLSP) are compositionally biased toward low complexity. Residues 1755–1796 (SDQSSGQSSSSGGLSPRSDSIGEITSSVTTPPSLSPRGSVSG) form a disordered region. The Carrier 2 domain maps to 1793–1870 (SVSGSQCKDV…SFKHMFQQGH (78 aa)). Ser1830 carries the post-translational modification O-(pantetheine 4'-phosphoryl)serine. A thioesterase (TE) domain region spans residues 1882 to 2146 (LKQYRATSTL…ERVAAFIRST (265 aa)). Ser1973 serves as the catalytic For thioesterase activity.

The protein operates within pigment biosynthesis. Functionally, polyketide synthase; part of the Pks1 gene cluster that mediates the biosynthesis of an anthraquinone derivative pigment that contributes to conidial pigmentation that provides protection from UV radiation, heat and cold stress. The polyketide synthase Pks1 produces 1-acetyl-2,4,6,8-tetrahydroxy-9,10-anthraquinone though condensation of acetyl-CoA with malonyl-CoA. The dehydratase EthD and the laccase Mlac1 further convert the anthraquinone derivative into the final conidial pigment. The protein is Polyketide synthase 1 of Metarhizium robertsii (strain ARSEF 23 / ATCC MYA-3075) (Metarhizium anisopliae (strain ARSEF 23)).